Consider the following 242-residue polypeptide: DNA repair protein RecO (242 aa).

The protein belongs to the RecO family.

Involved in DNA repair and RecF pathway recombination. In Laribacter hongkongensis (strain HLHK9), this protein is DNA repair protein RecO.